The following is a 702-amino-acid chain: uncharacterized protein (702 aa).

5 stretches are compositionally biased toward low complexity: residues 306 to 384 (NNNN…NNNN), 488 to 511 (PTKTTTSSNNSRNTSPTSSTTNIT), 559 to 590 (QQSQQQQQQQQQQQQQQQESNFYSNNNNNNNN), 603 to 612 (SNQNSNNNNQ), and 621 to 639 (NNNNNNTNSNNSNNNNNNN). 3 disordered regions span residues 306–385 (NNNN…NNNE), 488–513 (PTKTTTSSNNSRNTSPTSSTTNITYG), and 551–645 (STMN…NSRY). The VPS9 domain occupies 337-489 (NNINNNINNN…IKSLDILSPT (153 aa)).

This is an uncharacterized protein from Dictyostelium discoideum (Social amoeba).